The chain runs to 158 residues: UPF0336 protein Mb0654 (158 aa).

The protein belongs to the UPF0336 family.

The chain is UPF0336 protein Mb0654 from Mycobacterium bovis (strain ATCC BAA-935 / AF2122/97).